The following is a 102-amino-acid chain: Thioredoxin (102 aa).

The Thioredoxin domain maps to 1–102 (MVQVVSQENF…SLIKLISKHQ (102 aa)). Cys28 and Cys31 are joined by a disulfide.

Belongs to the thioredoxin family.

Participates in various redox reactions through the reversible oxidation of its active center dithiol to a disulfide and catalyzes dithiol-disulfide exchange reactions. In Chlamydia trachomatis serovar D (strain ATCC VR-885 / DSM 19411 / UW-3/Cx), this protein is Thioredoxin (trxA).